Here is a 649-residue protein sequence, read N- to C-terminus: Echinoderm microtubule-associated protein-like 2 (649 aa).

Residues lysine 10–valine 649 form a tandem atypical propeller in EMLs region. Coiled-coil stretches lie at residues isoleucine 13–glutamate 58 and tyrosine 73–histidine 114. 12 WD repeats span residues lysine 56–valine 93, arginine 97–serine 144, histidine 151–tryptophan 192, glutamate 195–leucine 234, lysine 241–lysine 280, isoleucine 285–serine 323, phenylalanine 369–serine 406, glutamine 410–threonine 447, leucine 452–valine 489, lysine 495–proline 535, phenylalanine 564–tyrosine 602, and alanine 609–valine 648.

This sequence belongs to the WD repeat EMAP family. Homotrimer; self-association is mediated by the N-terminal coiled coil. As to quaternary structure, interacts with GRID2 and may also interact with GRID1. Interacts with EML3. Binds unpolymerized tubulins via its WD repeat region. Ubiquitous.

The protein resides in the cytoplasm. Its subcellular location is the cytoskeleton. The protein localises to the spindle. In terms of biological role, tubulin binding protein that inhibits microtubule nucleation and growth, resulting in shorter microtubules. The polypeptide is Echinoderm microtubule-associated protein-like 2 (EML2) (Homo sapiens (Human)).